We begin with the raw amino-acid sequence, 459 residues long: ATP synthase subunit beta (459 aa).

148 to 155 (GGAGVGKT) provides a ligand contact to ATP.

The protein belongs to the ATPase alpha/beta chains family. F-type ATPases have 2 components, CF(1) - the catalytic core - and CF(0) - the membrane proton channel. CF(1) has five subunits: alpha(3), beta(3), gamma(1), delta(1), epsilon(1). CF(0) has three main subunits: a(1), b(2) and c(9-12). The alpha and beta chains form an alternating ring which encloses part of the gamma chain. CF(1) is attached to CF(0) by a central stalk formed by the gamma and epsilon chains, while a peripheral stalk is formed by the delta and b chains.

The protein localises to the cell inner membrane. The catalysed reaction is ATP + H2O + 4 H(+)(in) = ADP + phosphate + 5 H(+)(out). Its function is as follows. Produces ATP from ADP in the presence of a proton gradient across the membrane. The catalytic sites are hosted primarily by the beta subunits. The sequence is that of ATP synthase subunit beta from Hahella chejuensis (strain KCTC 2396).